The chain runs to 195 residues: ATP-dependent Clp protease proteolytic subunit (195 aa).

Ser-99 acts as the Nucleophile in catalysis. His-124 is a catalytic residue.

The protein belongs to the peptidase S14 family. As to quaternary structure, fourteen ClpP subunits assemble into 2 heptameric rings which stack back to back to give a disk-like structure with a central cavity, resembling the structure of eukaryotic proteasomes.

The protein resides in the cytoplasm. The catalysed reaction is Hydrolysis of proteins to small peptides in the presence of ATP and magnesium. alpha-casein is the usual test substrate. In the absence of ATP, only oligopeptides shorter than five residues are hydrolyzed (such as succinyl-Leu-Tyr-|-NHMec, and Leu-Tyr-Leu-|-Tyr-Trp, in which cleavage of the -Tyr-|-Leu- and -Tyr-|-Trp bonds also occurs).. In terms of biological role, cleaves peptides in various proteins in a process that requires ATP hydrolysis. Has a chymotrypsin-like activity. Plays a major role in the degradation of misfolded proteins. This is ATP-dependent Clp protease proteolytic subunit from Caldicellulosiruptor saccharolyticus (strain ATCC 43494 / DSM 8903 / Tp8T 6331).